Consider the following 450-residue polypeptide: ATP-dependent protease ATPase subunit HslU (450 aa).

Residues valine 29, 71 to 76, aspartate 261, glutamate 328, and arginine 400 contribute to the ATP site; that span reads GVGKTE.

Belongs to the ClpX chaperone family. HslU subfamily. As to quaternary structure, a double ring-shaped homohexamer of HslV is capped on each side by a ring-shaped HslU homohexamer. The assembly of the HslU/HslV complex is dependent on binding of ATP.

It is found in the cytoplasm. Functionally, ATPase subunit of a proteasome-like degradation complex; this subunit has chaperone activity. The binding of ATP and its subsequent hydrolysis by HslU are essential for unfolding of protein substrates subsequently hydrolyzed by HslV. HslU recognizes the N-terminal part of its protein substrates and unfolds these before they are guided to HslV for hydrolysis. This Rickettsia conorii (strain ATCC VR-613 / Malish 7) protein is ATP-dependent protease ATPase subunit HslU.